We begin with the raw amino-acid sequence, 214 residues long: Reticulon-3-B (214 aa).

Positions 1–22 (MAETSGPQSSHISSSSAGDKGS) are disordered. The Reticulon domain occupies 26–214 (VRDLLYWRDV…LPGALKKKSE (189 aa)). Transmembrane regions (helical) follow at residues 46–66 (MVLL…YLVL) and 150–170 (TYIG…LLAF).

As to quaternary structure, homodimer.

It is found in the endoplasmic reticulum membrane. It localises to the golgi apparatus membrane. May be involved in membrane trafficking in the early secretory pathway. The chain is Reticulon-3-B (rtn3-b) from Xenopus laevis (African clawed frog).